Reading from the N-terminus, the 280-residue chain is Ribosomal RNA small subunit methyltransferase A (280 aa).

Residues H15, L17, G42, E64, D89, and N109 each coordinate S-adenosyl-L-methionine.

This sequence belongs to the class I-like SAM-binding methyltransferase superfamily. rRNA adenine N(6)-methyltransferase family. RsmA subfamily.

Its subcellular location is the cytoplasm. The enzyme catalyses adenosine(1518)/adenosine(1519) in 16S rRNA + 4 S-adenosyl-L-methionine = N(6)-dimethyladenosine(1518)/N(6)-dimethyladenosine(1519) in 16S rRNA + 4 S-adenosyl-L-homocysteine + 4 H(+). Specifically dimethylates two adjacent adenosines (A1518 and A1519) in the loop of a conserved hairpin near the 3'-end of 16S rRNA in the 30S particle. May play a critical role in biogenesis of 30S subunits. The polypeptide is Ribosomal RNA small subunit methyltransferase A (Synechococcus sp. (strain WH7803)).